Here is a 22-residue protein sequence, read N- to C-terminus: Motilin (22 aa).

The segment covering 1–11 has biased composition (polar residues); sequence FVPFFTQSDIQ. Residues 1-22 form a disordered region; sequence FVPFFTQSDIQKMQEKERNKGQ. Residues 12 to 22 are compositionally biased toward basic and acidic residues; sequence KMQEKERNKGQ.

It belongs to the motilin family.

It is found in the secreted. Plays an important role in the regulation of interdigestive gastrointestinal motility and indirectly causes rhythmic contraction of duodenal and colonic smooth muscle. The sequence is that of Motilin (MLN) from Gallus gallus (Chicken).